Consider the following 35-residue polypeptide: Photosystem II reaction center protein T (35 aa).

A helical membrane pass occupies residues 3 to 23; it reads ALVYTFLLVSTLGIIFFAIFF.

Belongs to the PsbT family. As to quaternary structure, PSII is composed of 1 copy each of membrane proteins PsbA, PsbB, PsbC, PsbD, PsbE, PsbF, PsbH, PsbI, PsbJ, PsbK, PsbL, PsbM, PsbT, PsbY, PsbZ, Psb30/Ycf12, at least 3 peripheral proteins of the oxygen-evolving complex and a large number of cofactors. It forms dimeric complexes.

The protein resides in the plastid. Its subcellular location is the chloroplast thylakoid membrane. In terms of biological role, found at the monomer-monomer interface of the photosystem II (PS II) dimer, plays a role in assembly and dimerization of PSII. PSII is a light-driven water plastoquinone oxidoreductase, using light energy to abstract electrons from H(2)O, generating a proton gradient subsequently used for ATP formation. The chain is Photosystem II reaction center protein T from Drimys granadensis.